The sequence spans 357 residues: Fructose-1,6-bisphosphatase class 1 3 (357 aa).

Glutamate 94, aspartate 116, leucine 118, and aspartate 119 together coordinate Mg(2+). Residues 119–122 (DGSS) and asparagine 211 each bind substrate. Glutamate 283 is a binding site for Mg(2+).

This sequence belongs to the FBPase class 1 family. Homotetramer. Requires Mg(2+) as cofactor.

The protein localises to the cytoplasm. It catalyses the reaction beta-D-fructose 1,6-bisphosphate + H2O = beta-D-fructose 6-phosphate + phosphate. Its pathway is carbohydrate biosynthesis; Calvin cycle. This is Fructose-1,6-bisphosphatase class 1 3 from Methylibium petroleiphilum (strain ATCC BAA-1232 / LMG 22953 / PM1).